The primary structure comprises 277 residues: Outer kinetochore KNL1 complex subunit ZWINT (277 aa).

Positions 80-155 are interaction with NDC80 and ZW10; it reads ASEDTSRQKA…MEKRRAVQNQ (76 aa). The stretch at 104–217 forms a coiled coil; that stretch reads REHVEAIKIG…RYQTFLQLLY (114 aa). A disordered region spans residues 228 to 277; it reads AEAEAENLPDDKPQQPTRPQEQSTGDTMGRDPGVSFKAVGLQPAGDVNLP. Positions 241 to 253 are enriched in polar residues; that stretch reads QQPTRPQEQSTGD.

Component of the KNL1 complex composed of KNL1 and ZWINT. Part of the ten-subunit outer kinetochore KMN network that includes the KNL1, MIS12 and NDC80 complexes; a bioriented kinetochore contains approximately 150 copies of the network. Interacts with the MIS12 complex subunits MIS12 DSN1, and PMF1. Interacts with the NDC80 complex subunit NDC80 during mitosis. Interacts with ZW10. Interacts with CETN3.

It localises to the nucleus. Its subcellular location is the chromosome. It is found in the centromere. The protein resides in the kinetochore. Acts as a component of the outer kinetochore KNL1 complex that serves as a docking point for spindle assembly checkpoint components and mediates microtubule-kinetochore interactions. Kinetochores, consisting of a centromere-associated inner segment and a microtubule-contacting outer segment, play a crucial role in chromosome segregation by mediating the physical connection between centromeric DNA and spindle microtubules. The outer kinetochore is made up of the ten-subunit KMN network, comprising the MIS12, NDC80 and KNL1 complexes, and auxiliary microtubule-associated components; together they connect the outer kinetochore with the inner kinetochore, bind microtubules, and mediate interactions with mitotic checkpoint proteins that delay anaphase until chromosomes are bioriented on the spindle. Targets the RZZ complex to the kinetochore at prometaphase. Recruits MAD2L1 to the kinetochore, but is not required for BUB1B localization. In addition to orienting mitotic chromosomes, it is also essential for alignment of homologous chromosomes during meiotic metaphase I. In meiosis I, required to activate the spindle assembly checkpoint at unattached kinetochores to correct erroneous kinetochore-microtubule attachments. This Homo sapiens (Human) protein is Outer kinetochore KNL1 complex subunit ZWINT (ZWINT).